Reading from the N-terminus, the 793-residue chain is Short transient receptor potential channel 1 (793 aa).

Residues 1-30 form a disordered region; sequence MMAALYPSTDLSGVSSSSLPSSPSSSSPNE. The Cytoplasmic segment spans residues 1 to 345; that stretch reads MMAALYPSTD…FGQMSGYRRK (345 aa). The span at 15–28 shows a compositional bias: low complexity; sequence SSSSLPSSPSSSSP. ANK repeat units lie at residues 46-75, 83-109, 111-156, and 158-180; these read LNEK…SGDL, LGRN…YGCQ, ADAL…EYST, and MDVA…MLLK. Residues H189, C193, C195, and C198 each coordinate Zn(2+). Positions 346 to 379 form an intramembrane region, discontinuously helical; that stretch reads PTCKKIMTVLTVGIFWPVLSLCYLIAPKSQFGRI. The Cytoplasmic portion of the chain corresponds to 380–386; the sequence is IHTPFMK. A helical transmembrane segment spans residues 387–404; that stretch reads FIIHGASYFTFLLLLNLY. Residues 405 to 422 lie on the Extracellular side of the membrane; it reads SLVYNEDKKNTMGPALER. Residues 423–439 traverse the membrane as a helical segment; that stretch reads IDYLLILWIIGMIWSDI. At 440–455 the chain is on the cytoplasmic side; the sequence is KRLWYEGLEDFLEESR. Residues 456–475 traverse the membrane as a helical segment; sequence NQLSFVMNSLYLATFALKVV. Over 476 to 496 the chain is Extracellular; sequence AHNKFHDFADRKDWDAFHPTL. A helical transmembrane segment spans residues 497-517; it reads VAEGLFAFANVLSYLRLFFMY. The Cytoplasmic portion of the chain corresponds to 518–536; the sequence is TTSSILGPLQISMGQMLQD. Residues 537-558 form a helical membrane-spanning segment; it reads FGKFLGMFLLVLFSFTIGLTQL. At 559–623 the chain is on the extracellular side; it reads YDKGYTSKEQ…GEELQSFVGA (65 aa). Residues C571 and C576 are joined by a disulfide bond. Residues 624 to 644 traverse the membrane as a helical segment; sequence VIVGTYNVVVVIVLTKLLVAM. At 645-793 the chain is on the cytoplasmic side; that stretch reads LHKSFQLIAN…SKYAMFYPRN (149 aa).

It belongs to the transient receptor (TC 1.A.4) family. STrpC subfamily. TRPC1 sub-subfamily. In terms of assembly, heterotetramer with TRPC4 and/or TRPC5. Forms a heteromeric ion channel with TRPC4, with a 1:3 TRPC1:TRPC4 stoichiometry. Unlike other TRP channel proteins, does not form a homomeric channel. Interacts with TRPC4AP. Interacts with ITPR3. Interacts with MX1 and RNF24. Interacts with FKBP4. Interacts with PLSCR1. Interacts with PKD2L2. Forms a heterotetramer with PKD2 with a 2:2 stoichiometry; has distinct channel properties separate from PKD2 or TRPC1 homomers alone. Activation of PRKCA induces phosphorylation of TRPC1 and subsequent Ca2+ entry into cells.

It localises to the cell membrane. It carries out the reaction Ca(2+)(in) = Ca(2+)(out). The enzyme catalyses Na(+)(in) = Na(+)(out). The catalysed reaction is Li(+)(in) = Li(+)(out). It catalyses the reaction Cs(+)(in) = Cs(+)(out). With respect to regulation, may be operated by a phosphatidylinositol second messenger system activated by receptor tyrosine kinases or G-protein coupled receptors. Also activated by intracellular calcium store depletion. Its function is as follows. Forms a receptor-activated non-selective calcium permeant cation channel. Forms a heteromeric ion channel with TRPC4 or TRPC5 that has reduced calcium permeability compared to the homomeric TRPC4 or TRPC5 channel. Also permeable to monovalent ions including sodium, lithium and cesium ions. This is Short transient receptor potential channel 1 (Trpc1) from Mus musculus (Mouse).